A 3081-amino-acid polypeptide reads, in one-letter code: Cilia- and flagella-associated protein 54 (3081 aa).

Disordered stretches follow at residues 542-579 (SGTA…AGGA), 591-626 (TQTA…QSSL), 910-942 (PPQP…GARK), 1406-1451 (ADAP…GITP), 1518-1586 (ESIL…YPVV), 1636-1657 (RRAA…EERP), 2176-2210 (GERT…LPEP), 2229-2306 (MASG…SQRA), and 2776-2806 (ARPV…SGDG). The segment covering 564–579 (GGSASPPNGSSGAGGA) has biased composition (low complexity). The segment covering 1428 to 1449 (MPPPVPDPSAAGPPPLTPPEGI) has biased composition (pro residues). Over residues 1538–1550 (GGKDDKKKDDKAP) the composition is skewed to basic and acidic residues. Low complexity-rich tracts occupy residues 1638–1648 (AALAASASTAG), 2181–2199 (APKP…AAAA), and 2240–2269 (EPSS…SPTG). A compositionally biased stretch (pro residues) spans 2289–2301 (PEVPGPPPPPPPS). Residues 2776–2788 (ARPVATSSSGARP) are compositionally biased toward low complexity. A compositionally biased stretch (gly residues) spans 2796 to 2805 (KPGAGGGSGD).

Belongs to the CFAP54 family. Part of the PDCP1 complex composed of CFAP46, CFAP54, CFAP74 and CFAP221; the PDCP1 complex binds calmodulin.

It is found in the cytoplasm. The protein resides in the cytoskeleton. The protein localises to the cilium axoneme. The sequence is that of Cilia- and flagella-associated protein 54 from Chlamydomonas reinhardtii (Chlamydomonas smithii).